The sequence spans 27 residues: DELTA-pseudomyrmecitoxin-Pp1a subunit A (27 aa).

In terms of assembly, heterodimer composed of subunit A and subunit B (DELTA-PSDTX-Pp1a); disulfide-linked. As to expression, expressed by the venom gland.

Its subcellular location is the secreted. This heterodimer has insecticidal and cytotoxic properties. Induces immediate paralysis when injected into blowflies (Lucilia cuprina), and then death within 24 hours. Also inhibits the growth of Aedes albopictus mosquito C6/36 cells. This Pseudomyrmex penetrator (Ant) protein is DELTA-pseudomyrmecitoxin-Pp1a subunit A.